The sequence spans 231 residues: Ribose-5-phosphate isomerase A (231 aa).

Residues 28-31 (TGST), 83-86 (DGAD), and 96-99 (KGGG) each bind substrate. Glu105 acts as the Proton acceptor in catalysis. Substrate is bound at residue Lys123.

The protein belongs to the ribose 5-phosphate isomerase family. Homodimer.

The enzyme catalyses aldehydo-D-ribose 5-phosphate = D-ribulose 5-phosphate. It functions in the pathway carbohydrate degradation; pentose phosphate pathway; D-ribose 5-phosphate from D-ribulose 5-phosphate (non-oxidative stage): step 1/1. Catalyzes the reversible conversion of ribose-5-phosphate to ribulose 5-phosphate. The chain is Ribose-5-phosphate isomerase A from Sinorhizobium fredii (strain NBRC 101917 / NGR234).